The sequence spans 250 residues: UPF0259 membrane protein SG1383 (250 aa).

The next 6 membrane-spanning stretches (helical) occupy residues 20-40 (FASI…LGHA), 86-106 (AGTL…LTMI), 121-141 (IGLS…TTLL), 146-166 (LLLI…APVI), 191-211 (LLAP…LLAT), and 219-239 (LVAV…LLIY).

Belongs to the UPF0259 family.

The protein localises to the cell inner membrane. This chain is UPF0259 membrane protein SG1383, found in Sodalis glossinidius (strain morsitans).